Reading from the N-terminus, the 679-residue chain is Protein hook (679 aa).

Positions 6-123 (NEMYYSLLEW…RLLQLVLGCA (118 aa)) constitute a Calponin-homology (CH) domain. Coiled-coil stretches lie at residues 135–437 (EIMC…LKCG) and 480–574 (QTAL…QEIL).

The protein belongs to the hook family. Homodimer. Interacts with microtubules via its N-terminus.

It localises to the cytoplasm. The protein resides in the cytoskeleton. The protein localises to the endosome. Its subcellular location is the synapse. In terms of biological role, involved in endocytic trafficking by stabilizing organelles of the endocytic pathway. Probably acts as a cytoskeletal linker protein required to tether endosome vesicles to the cytoskeleton. Involved in modulation of endocytosis at stages required for down-regulation of membrane proteins that control synapse size. Not involved in synaptic vesicle recycling. Required in R7 cells for boss endocytosis into multivesicular bodies (MVBs). Has a role in regulating adult longevity. This Drosophila simulans (Fruit fly) protein is Protein hook.